The primary structure comprises 363 residues: Chorismate synthase (363 aa).

Residues 36-58 form a disordered region; the sequence is SESDIQGDLDRRRPGQSKITTPR. An NADP(+)-binding site is contributed by Arg47. FMN contacts are provided by residues 124–126, Gly286, 301–305, and Arg327; these read RSS and KPTAT.

Belongs to the chorismate synthase family. In terms of assembly, homotetramer. The cofactor is FMNH2.

The enzyme catalyses 5-O-(1-carboxyvinyl)-3-phosphoshikimate = chorismate + phosphate. It participates in metabolic intermediate biosynthesis; chorismate biosynthesis; chorismate from D-erythrose 4-phosphate and phosphoenolpyruvate: step 7/7. In terms of biological role, catalyzes the anti-1,4-elimination of the C-3 phosphate and the C-6 proR hydrogen from 5-enolpyruvylshikimate-3-phosphate (EPSP) to yield chorismate, which is the branch point compound that serves as the starting substrate for the three terminal pathways of aromatic amino acid biosynthesis. This reaction introduces a second double bond into the aromatic ring system. In Crocosphaera subtropica (strain ATCC 51142 / BH68) (Cyanothece sp. (strain ATCC 51142)), this protein is Chorismate synthase.